The following is a 195-amino-acid chain: Imidazoleglycerol-phosphate dehydratase (195 aa).

Belongs to the imidazoleglycerol-phosphate dehydratase family.

It localises to the cytoplasm. The catalysed reaction is D-erythro-1-(imidazol-4-yl)glycerol 3-phosphate = 3-(imidazol-4-yl)-2-oxopropyl phosphate + H2O. The protein operates within amino-acid biosynthesis; L-histidine biosynthesis; L-histidine from 5-phospho-alpha-D-ribose 1-diphosphate: step 6/9. The sequence is that of Imidazoleglycerol-phosphate dehydratase from Bacillus cytotoxicus (strain DSM 22905 / CIP 110041 / 391-98 / NVH 391-98).